A 665-amino-acid chain; its full sequence is MAGLSGAQIPDGEFTALVYRLIRDARYAEAVQLLGRELQRSPRSRAGLSLLGYCYYRLQEFALAAECYEQLGQLHPELEQYRLYQAQALYKACLYPEATRVAFLLLDNPAYHSRVLRLQAAIKYSEGDLPGSRSLVEQLLSGEGGEESGGDNETDGQVNLGCLLYKEGQYEAACSKFSATLQASGYQPDLSYNLALAYYSSRQYASALKHIAEIIERGIRQHPELGVGMTTEGFDVRSVGNTLVLHQTALVEAFNLKAAIEYQLRNYEVAQETLTDMPPRAEEELDPVTLHNQALMNMDARPTEGFEKLQFLLQQNPFPPETFGNLLLLYCKYEYFDLAADVLAENAHLTYKFLTPYLYDFLDALITCQTAPEEAFIKLDGLAGMLTEQLRRLTKQVQEARHNRDDEAIKKAVNEYDETMEKYIPVLMAQAKIYWNLENYPMVEKVFRKSVEFCNDHDVWKLNVAHVLFMQENKYKEAIGFYEPIVKKHYDNILNVSAIVLANLCVSYIMTSQNEEAEELMRKIEKEEEQLSYDDPNRKMYHLCIVNLVIGTLYCAKGNYEFGISRVIKSLEPYNKKLGTDTWYYAKRCFLSLLENMSKHMIVIHDSVIQECVQFLGHCELYGTNIPAVIEQPLEEERMHVGKNTVTDESRQLKALIYEIIGWNK.

TPR repeat units lie at residues 11–44 (DGEFTALVYRLIRDARYAEAVQLLGRELQRSPRS), 45–78 (RAGLSLLGYCYYRLQEFALAAECYEQLGQLHPEL), 154–187 (TDGQVNLGCLLYKEGQYEAACSKFSATLQASGYQ), 189–221 (DLSYNLALAYYSSRQYASALKHIAEIIERGIRQ), 393–424 (LTKQVQEARHNRDDEAIKKAVNEYDETMEKYI), 425–457 (PVLMAQAKIYWNLENYPMVEKVFRKSVEFCNDH), and 459–492 (VWKLNVAHVLFMQENKYKEAIGFYEPIVKKHYDN). Residues 508-535 (YIMTSQNEEAEELMRKIEKEEEQLSYDD) adopt a coiled-coil conformation. A TPR 8 repeat occupies 544-577 (CIVNLVIGTLYCAKGNYEFGISRVIKSLEPYNKK).

The protein belongs to the TTC30/dfy-1/fleer family.

The protein localises to the cell projection. It is found in the cilium. Required for polyglutamylation of axonemal tubulin. Plays a role in anterograde intraflagellar transport (IFT), the process by which cilia precursors are transported from the base of the cilium to the site of their incorporation at the tip. The sequence is that of Intraflagellar transport protein 70A from Homo sapiens (Human).